Here is a 291-residue protein sequence, read N- to C-terminus: Pantothenate synthetase (291 aa).

30–37 serves as a coordination point for ATP; sequence MGYLHVGH. The Proton donor role is filled by histidine 37. Residue glutamine 61 coordinates (R)-pantoate. Glutamine 61 is a binding site for beta-alanine. 147–150 lines the ATP pocket; that stretch reads GEKD. Glutamine 153 is a binding site for (R)-pantoate. Residues valine 176 and 184–187 contribute to the ATP site; that span reads CSSR.

It belongs to the pantothenate synthetase family. In terms of assembly, homodimer.

The protein resides in the cytoplasm. It catalyses the reaction (R)-pantoate + beta-alanine + ATP = (R)-pantothenate + AMP + diphosphate + H(+). It functions in the pathway cofactor biosynthesis; (R)-pantothenate biosynthesis; (R)-pantothenate from (R)-pantoate and beta-alanine: step 1/1. Catalyzes the condensation of pantoate with beta-alanine in an ATP-dependent reaction via a pantoyl-adenylate intermediate. In Rhizobium meliloti (strain 1021) (Ensifer meliloti), this protein is Pantothenate synthetase.